Here is a 124-residue protein sequence, read N- to C-terminus: uncharacterized protein (124 aa).

The dksA C4-type; degenerate zinc-finger motif lies at 73–94 (CEETGAPIPLAKLAVLPTARTA).

This is an uncharacterized protein from Bacillus subtilis (strain 168).